The following is a 527-amino-acid chain: UDP-glucuronosyltransferase 2A3 (527 aa).

The signal sequence occupies residues 1-23; sequence MRSDKSALVFLLLQLFCVGCGFC. Topologically, residues 24–491 are extracellular; the sequence is GKVLVWPCDM…TWFQHYSIDV (468 aa). Residue Asn313 is glycosylated (N-linked (GlcNAc...) asparagine). A helical transmembrane segment spans residues 492 to 512; the sequence is IGFLLACVATAIFLFTKCFLF. At 513-527 the chain is on the cytoplasmic side; the sequence is SCQKFNKTRKIEKRE.

It belongs to the UDP-glycosyltransferase family.

It is found in the membrane. The catalysed reaction is glucuronate acceptor + UDP-alpha-D-glucuronate = acceptor beta-D-glucuronoside + UDP + H(+). UDP-glucuronosyltransferases catalyze phase II biotransformation reactions in which lipophilic substrates are conjugated with glucuronic acid to increase water solubility and enhance excretion. They are of major importance in the conjugation and subsequent elimination of potentially toxic xenobiotics and endogenous compounds. In Homo sapiens (Human), this protein is UDP-glucuronosyltransferase 2A3 (UGT2A3).